We begin with the raw amino-acid sequence, 344 residues long: Phosphoribosylformylglycinamidine cyclo-ligase (344 aa).

Belongs to the AIR synthase family.

Its subcellular location is the cytoplasm. The enzyme catalyses 2-formamido-N(1)-(5-O-phospho-beta-D-ribosyl)acetamidine + ATP = 5-amino-1-(5-phospho-beta-D-ribosyl)imidazole + ADP + phosphate + H(+). It participates in purine metabolism; IMP biosynthesis via de novo pathway; 5-amino-1-(5-phospho-D-ribosyl)imidazole from N(2)-formyl-N(1)-(5-phospho-D-ribosyl)glycinamide: step 2/2. This chain is Phosphoribosylformylglycinamidine cyclo-ligase, found in Neisseria meningitidis serogroup C (strain 053442).